We begin with the raw amino-acid sequence, 351 residues long: Dihydroorotate dehydrogenase (quinone) (351 aa).

Residues 67-71 (AGFDK) and Thr-91 contribute to the FMN site. Lys-71 is a binding site for substrate. Substrate is bound at residue 116–120 (NAMGF). 2 residues coordinate FMN: Asn-145 and Asn-178. Asn-178 contributes to the substrate binding site. Ser-181 serves as the catalytic Nucleophile. Substrate is bound at residue Asn-183. Residues Lys-214 and Thr-242 each contribute to the FMN site. 243–244 (NT) lines the substrate pocket. FMN-binding positions include Gly-262, Gly-291, and 312 to 313 (YS).

Belongs to the dihydroorotate dehydrogenase family. Type 2 subfamily. As to quaternary structure, monomer. FMN is required as a cofactor.

The protein localises to the cell membrane. It catalyses the reaction (S)-dihydroorotate + a quinone = orotate + a quinol. It participates in pyrimidine metabolism; UMP biosynthesis via de novo pathway; orotate from (S)-dihydroorotate (quinone route): step 1/1. Its function is as follows. Catalyzes the conversion of dihydroorotate to orotate with quinone as electron acceptor. The chain is Dihydroorotate dehydrogenase (quinone) from Helicobacter pylori (strain Shi470).